A 72-amino-acid chain; its full sequence is Heat-stable enterotoxin C (72 aa).

Residues 1–19 (MKKIVFVLTLMLFSFGTLG) form the signal peptide. 3 disulfide bridges follow: cysteine 60–cysteine 65, cysteine 61–cysteine 69, and cysteine 64–cysteine 72.

This sequence belongs to the heat-stable enterotoxin family.

The protein localises to the secreted. Toxin which activates the particulate form of guanylate cyclase and increases cyclic GMP levels within the host intestinal epithelial cells. Highly toxic. The polypeptide is Heat-stable enterotoxin C (ystC) (Yersinia enterocolitica).